Here is a 554-residue protein sequence, read N- to C-terminus: Phenylalanine--tRNA ligase beta subunit (554 aa).

In terms of domain architecture, B5 spans 276–351 (LTPKSRMISV…INYGYEKFEG (76 aa)). Mg(2+) contacts are provided by D329, D335, E338, and E339.

It belongs to the phenylalanyl-tRNA synthetase beta subunit family. Type 2 subfamily. Tetramer of two alpha and two beta subunits. It depends on Mg(2+) as a cofactor.

The protein resides in the cytoplasm. The catalysed reaction is tRNA(Phe) + L-phenylalanine + ATP = L-phenylalanyl-tRNA(Phe) + AMP + diphosphate + H(+). This Methanococcus maripaludis (strain C6 / ATCC BAA-1332) protein is Phenylalanine--tRNA ligase beta subunit.